We begin with the raw amino-acid sequence, 75 residues long: Sec-independent protein translocase protein TatA (75 aa).

Residues 1–21 (MGSFSIWHWLIVLVIVVLVFG) form a helical membrane-spanning segment. Composition is skewed to basic and acidic residues over residues 43 to 54 (MRDSEKSGEDVQ) and 66 to 75 (ATDKSHTVSH). Positions 43-75 (MRDSEKSGEDVQQKIGGDTLDAQATDKSHTVSH) are disordered.

Belongs to the TatA/E family. The Tat system comprises two distinct complexes: a TatABC complex, containing multiple copies of TatA, TatB and TatC subunits, and a separate TatA complex, containing only TatA subunits. Substrates initially bind to the TatABC complex, which probably triggers association of the separate TatA complex to form the active translocon.

It localises to the cell inner membrane. Its function is as follows. Part of the twin-arginine translocation (Tat) system that transports large folded proteins containing a characteristic twin-arginine motif in their signal peptide across membranes. TatA could form the protein-conducting channel of the Tat system. The sequence is that of Sec-independent protein translocase protein TatA from Aromatoleum aromaticum (strain DSM 19018 / LMG 30748 / EbN1) (Azoarcus sp. (strain EbN1)).